The primary structure comprises 74 residues: ERTHTGEKPFECQECHKRFTRDHHLKTHMRLHTGERPYRCEHCDRQFVQVANLRRHLRVHTGERPYGCEHCSMK.

4 consecutive C2H2-type zinc fingers follow at residues 1–4 (ERTH), 10–32 (FECQ…MRLH), 38–60 (YRCE…LRVH), and 66–74 (YGCEHCSMK).

This sequence belongs to the krueppel C2H2-type zinc-finger protein family.

The protein localises to the nucleus. Its function is as follows. Krueppel is a gap class segmentation protein. This Tribolium castaneum (Red flour beetle) protein is Protein krueppel (Kr).